Consider the following 160-residue polypeptide: Phosphopantetheine adenylyltransferase (160 aa).

Ser9 serves as a coordination point for substrate. Residues 9-10 (SL) and His17 contribute to the ATP site. Positions 41, 74, and 88 each coordinate substrate. Residues 89–91 (GIR), Glu99, and 123–129 (YLHLSST) contribute to the ATP site.

It belongs to the bacterial CoaD family. As to quaternary structure, homohexamer. Mg(2+) is required as a cofactor.

It localises to the cytoplasm. It carries out the reaction (R)-4'-phosphopantetheine + ATP + H(+) = 3'-dephospho-CoA + diphosphate. The protein operates within cofactor biosynthesis; coenzyme A biosynthesis; CoA from (R)-pantothenate: step 4/5. Its function is as follows. Reversibly transfers an adenylyl group from ATP to 4'-phosphopantetheine, yielding dephospho-CoA (dPCoA) and pyrophosphate. The polypeptide is Phosphopantetheine adenylyltransferase (Renibacterium salmoninarum (strain ATCC 33209 / DSM 20767 / JCM 11484 / NBRC 15589 / NCIMB 2235)).